The following is a 634-amino-acid chain: Extracellular metalloproteinase mep (634 aa).

Positions Met-1–Ala-18 are cleaved as a signal peptide. Residues His-19–Glu-245 constitute a propeptide that is removed on maturation. Residue Asn-286 is glycosylated (N-linked (GlcNAc...) asparagine). Residue His-429 participates in Zn(2+) binding. The active site involves Glu-430. His-433 is a binding site for Zn(2+).

Belongs to the peptidase M36 family. The cofactor is Zn(2+).

The protein resides in the secreted. Secreted metalloproteinase that allows assimilation of proteinaceous substrates and probably acts as a virulence factor. This is Extracellular metalloproteinase mep (mep) from Aspergillus fumigatus (strain CBS 144.89 / FGSC A1163 / CEA10) (Neosartorya fumigata).